Here is a 234-residue protein sequence, read N- to C-terminus: Large ribosomal subunit protein bL25 (234 aa).

The segment at 1-24 (MATVMELKATARPKSGKGAARAER) is disordered.

Belongs to the bacterial ribosomal protein bL25 family. CTC subfamily. Part of the 50S ribosomal subunit; part of the 5S rRNA/L5/L18/L25 subcomplex. Contacts the 5S rRNA. Binds to the 5S rRNA independently of L5 and L18.

Its function is as follows. This is one of the proteins that binds to the 5S RNA in the ribosome where it forms part of the central protuberance. In Rhodopseudomonas palustris (strain BisB5), this protein is Large ribosomal subunit protein bL25.